Reading from the N-terminus, the 758-residue chain is Aspartyl/asparaginyl beta-hydroxylase (758 aa).

Positions 1–46 (MAQRKNAKSSGNSSSSGSGSGSTSAGSSSPGARRETKHGGHKNGRK) are disordered. Residues 1–53 (MAQRKNAKSSGNSSSSGSGSGSTSAGSSSPGARRETKHGGHKNGRKGGLSGTS) are Cytoplasmic-facing. Positions 9–31 (SSGNSSSSGSGSGSTSAGSSSPG) are enriched in low complexity. Ser14 carries the phosphoserine modification. A helical; Signal-anchor for type II membrane protein membrane pass occupies residues 54–74 (FFTWFMVIALLGVWTSVAVVW). Residue Leu64 is glycosylated (N-linked (GlcNAc...) asparagine). Topologically, residues 75-758 (FDLVDYEEVL…PQQRRSLPAI (684 aa)) are lumenal. Positions 91, 93, 95, 97, and 102 each coordinate Ca(2+). 2 disordered regions span residues 111–140 (ERSTSEPAVPPEEAEPHTEPEEQVPVEAEP) and 304–324 (EEQQEVPPETNRKTDDPEQKA). Positions 313 to 324 (TNRKTDDPEQKA) are enriched in basic and acidic residues. One copy of the TPR 1 repeat lies at 341-374 (IKAELDAAEKLRKRGKIEEAVNAFKELVRKYPQS). Residue Asn452 is glycosylated (N-linked (GlcNAc...) asparagine). TPR repeat units lie at residues 454-487 (TSLKNDLGVGYLLIGDNDNAKKVYEEVLSVTPND), 489-521 (FAKVHYGFILKAQNKIAESIPYLKEGIESGDPG), and 525-557 (GRFYFHLGDAMQRVGNKEAYKWYELGHKRGHFA). Position 625 (Trp625) interacts with 2-oxoglutarate. A disulfide bridge connects residues Cys641 and Cys648. Ser668 provides a ligand contact to 2-oxoglutarate. His679 provides a ligand contact to Fe cation. 688–690 (RMH) contacts 2-oxoglutarate. A glycan (N-linked (GlcNAc...) asparagine) is linked at Asn706. Fe cation is bound at residue His725. Arg735 provides a ligand contact to 2-oxoglutarate.

This sequence belongs to the aspartyl/asparaginyl beta-hydroxylase family. In terms of assembly, monomer. Isoform 8 interacts with ORAI1 and STIM1. Isoform 4 interacts with CASQ2. Fe cation serves as cofactor. In terms of tissue distribution, isoform 1 is detected in all tissues tested. Isoform 8 is mainly expressed in pancreas, heart, brain, kidney and liver. Isoform 8 is expressed in kidney (at protein level).

The protein resides in the endoplasmic reticulum membrane. The protein localises to the sarcoplasmic reticulum membrane. It carries out the reaction L-aspartyl-[protein] + 2-oxoglutarate + O2 = 3-hydroxy-L-aspartyl-[protein] + succinate + CO2. In terms of biological role, specifically hydroxylates an Asp or Asn residue in certain epidermal growth factor-like (EGF) domains of a number of proteins. Membrane-bound Ca(2+)-sensing protein, which is a structural component of the ER-plasma membrane junctions. Isoform 8 regulates the activity of Ca(+2) released-activated Ca(+2) (CRAC) channels in T-cells. This chain is Aspartyl/asparaginyl beta-hydroxylase (ASPH), found in Homo sapiens (Human).